The sequence spans 348 residues: Dihydroorotase (348 aa).

Zn(2+) contacts are provided by His14 and His16. Residues 16-18 (HLR) and Asn42 each bind substrate. 3 residues coordinate Zn(2+): Lys100, His137, and His175. Lys100 carries the post-translational modification N6-carboxylysine. His137 is a binding site for substrate. Residue Leu220 participates in substrate binding. Asp248 contributes to the Zn(2+) binding site. Asp248 is a catalytic residue. The substrate site is built by His252 and Ala264.

Belongs to the metallo-dependent hydrolases superfamily. DHOase family. Class II DHOase subfamily. As to quaternary structure, homodimer. It depends on Zn(2+) as a cofactor.

The catalysed reaction is (S)-dihydroorotate + H2O = N-carbamoyl-L-aspartate + H(+). The protein operates within pyrimidine metabolism; UMP biosynthesis via de novo pathway; (S)-dihydroorotate from bicarbonate: step 3/3. In terms of biological role, catalyzes the reversible cyclization of carbamoyl aspartate to dihydroorotate. In Pseudomonas fluorescens (strain Pf0-1), this protein is Dihydroorotase.